A 100-amino-acid polypeptide reads, in one-letter code: Small ribosomal subunit protein uS14 (100 aa).

The protein belongs to the universal ribosomal protein uS14 family. In terms of assembly, part of the 30S ribosomal subunit. Contacts proteins S3 and S10.

Its function is as follows. Binds 16S rRNA, required for the assembly of 30S particles and may also be responsible for determining the conformation of the 16S rRNA at the A site. This chain is Small ribosomal subunit protein uS14, found in Synechocystis sp. (strain ATCC 27184 / PCC 6803 / Kazusa).